Consider the following 469-residue polypeptide: Glutamate--tRNA ligase 2 (469 aa).

The 'HIGH' region motif lies at Pro-10–Ser-20. The 'KMSKS' region signature appears at Lys-239 to Arg-243. Lys-242 serves as a coordination point for ATP.

The protein belongs to the class-I aminoacyl-tRNA synthetase family. Glutamate--tRNA ligase type 1 subfamily. As to quaternary structure, monomer.

The protein resides in the cytoplasm. It catalyses the reaction tRNA(Glu) + L-glutamate + ATP = L-glutamyl-tRNA(Glu) + AMP + diphosphate. In terms of biological role, catalyzes the attachment of glutamate to tRNA(Glu) in a two-step reaction: glutamate is first activated by ATP to form Glu-AMP and then transferred to the acceptor end of tRNA(Glu). The sequence is that of Glutamate--tRNA ligase 2 from Rickettsia typhi (strain ATCC VR-144 / Wilmington).